The primary structure comprises 361 residues: Probable dual-specificity RNA methyltransferase RlmN (361 aa).

Glu102 functions as the Proton acceptor in the catalytic mechanism. The Radical SAM core domain occupies 108-344 (SGDRLTVCVS…VRWSKGLGAD (237 aa)). The cysteines at positions 115 and 347 are disulfide-linked. The [4Fe-4S] cluster site is built by Cys122, Cys126, and Cys129. S-adenosyl-L-methionine contacts are provided by residues 169-170 (GE), Ser199, 228-230 (SLH), and Asn304. Cys347 functions as the S-methylcysteine intermediate in the catalytic mechanism.

It belongs to the radical SAM superfamily. RlmN family. The cofactor is [4Fe-4S] cluster.

The protein resides in the cytoplasm. It catalyses the reaction adenosine(2503) in 23S rRNA + 2 reduced [2Fe-2S]-[ferredoxin] + 2 S-adenosyl-L-methionine = 2-methyladenosine(2503) in 23S rRNA + 5'-deoxyadenosine + L-methionine + 2 oxidized [2Fe-2S]-[ferredoxin] + S-adenosyl-L-homocysteine. It carries out the reaction adenosine(37) in tRNA + 2 reduced [2Fe-2S]-[ferredoxin] + 2 S-adenosyl-L-methionine = 2-methyladenosine(37) in tRNA + 5'-deoxyadenosine + L-methionine + 2 oxidized [2Fe-2S]-[ferredoxin] + S-adenosyl-L-homocysteine. Its function is as follows. Specifically methylates position 2 of adenine 2503 in 23S rRNA and position 2 of adenine 37 in tRNAs. The chain is Probable dual-specificity RNA methyltransferase RlmN from Synechococcus elongatus (strain ATCC 33912 / PCC 7942 / FACHB-805) (Anacystis nidulans R2).